Reading from the N-terminus, the 357-residue chain is Trans-resveratrol di-O-methyltransferase (357 aa).

Gly-200, Asp-223, Asp-243, Met-244, and Lys-257 together coordinate S-adenosyl-L-methionine. The active-site Proton acceptor is the His-261.

Belongs to the class I-like SAM-binding methyltransferase superfamily. Cation-independent O-methyltransferase family. COMT subfamily.

The enzyme catalyses trans-resveratrol + 2 S-adenosyl-L-methionine = pterostilbene + 2 S-adenosyl-L-homocysteine + 2 H(+). Its function is as follows. Catalyzes the biosynthesis of pterostilbene from resveratrol. Pterostilbene has both antifungal and pharmacological properties. Also has activity toward resveratrol monomethyl ether (RME). The protein is Trans-resveratrol di-O-methyltransferase (ROMT) of Vitis vinifera (Grape).